Consider the following 505-residue polypeptide: ATP synthase subunit beta, mitochondrial (505 aa).

ATP is bound at residue 184-191 (GGAGVGKT).

The protein belongs to the ATPase alpha/beta chains family. In terms of assembly, F-type ATPases have 2 components, CF(1) - the catalytic core - and CF(0) - the membrane proton channel. CF(1) has five subunits: alpha(3), beta(3), gamma(1), delta(1), epsilon(1). CF(0) has three main subunits: a, b and c.

Its subcellular location is the mitochondrion. The protein resides in the mitochondrion inner membrane. The catalysed reaction is ATP + H2O + 4 H(+)(in) = ADP + phosphate + 5 H(+)(out). Mitochondrial membrane ATP synthase (F(1)F(0) ATP synthase or Complex V) produces ATP from ADP in the presence of a proton gradient across the membrane which is generated by electron transport complexes of the respiratory chain. F-type ATPases consist of two structural domains, F(1) - containing the extramembraneous catalytic core, and F(0) - containing the membrane proton channel, linked together by a central stalk and a peripheral stalk. During catalysis, ATP synthesis in the catalytic domain of F(1) is coupled via a rotary mechanism of the central stalk subunits to proton translocation. Subunits alpha and beta form the catalytic core in F(1). Rotation of the central stalk against the surrounding alpha(3)beta(3) subunits leads to hydrolysis of ATP in three separate catalytic sites on the beta subunits. The sequence is that of ATP synthase subunit beta, mitochondrial (ATP2) from Kluyveromyces lactis (strain ATCC 8585 / CBS 2359 / DSM 70799 / NBRC 1267 / NRRL Y-1140 / WM37) (Yeast).